The chain runs to 181 residues: Succinate dehydrogenase [ubiquinone] cytochrome b small subunit, mitochondrial (181 aa).

The N-terminal 31 residues, 1-31 (MMLPRSMKFMTGRRIFHTATVRAFQSTAKKS), are a transit peptide targeting the mitochondrion. At 32–66 (LTIPFLPVLPQKPGGVRGTPNDAYVPPPENKLEGS) the chain is on the mitochondrial matrix side. A helical membrane pass occupies residues 67-88 (YHWYMEKIFALSVVPLATTAML). At 89–98 (TTGPLSTAAD) the chain is on the mitochondrial intermembrane side. The helical transmembrane segment at 99–118 (SFFSVMLLGYCYMEFNSCIT) threads the bilayer. Cys109 provides a ligand contact to heme. The Mitochondrial matrix segment spans residues 119–127 (DYISERVYG). Tyr120 serves as a coordination point for a ubiquinone. Residues 128–148 (VWHKYAMYMLGLGSAVSLFGI) traverse the membrane as a helical segment. At 149-181 (YKLETENDGVVGLVKSLWDSSEKDNSQKIEAKK) the chain is on the mitochondrial intermembrane side.

This sequence belongs to the CybS family. Forms part of complex II containing four subunits: a flavoprotein (FP), an iron-sulfur protein (IP) and a cytochrome b composed of a large and a small subunit.

The protein resides in the mitochondrion inner membrane. It functions in the pathway carbohydrate metabolism; tricarboxylic acid cycle. Membrane-anchoring subunit of succinate dehydrogenase (SDH) that is involved in system II of the mitochondrial electron transport chain and is responsible for transferring electrons from succinate to ubiquinone (coenzyme Q). SDH3 and SDH4 form the membrane dimer that anchors the catalytic dimer formed by SDH1 and SDH2 to the matrix surface of the mitochondrial inner membrane. Electrons originating from the catalytic dimer enter the membrane dimer for ubiquinone reduction. This is Succinate dehydrogenase [ubiquinone] cytochrome b small subunit, mitochondrial (SDH4) from Saccharomyces cerevisiae (strain ATCC 204508 / S288c) (Baker's yeast).